A 288-amino-acid chain; its full sequence is L-xylulose reductase (288 aa).

NADP(+) is bound by residues Ile-39, Asn-113, and Lys-147. Ser-181 functions as the Proton donor in the catalytic mechanism. NADP(+) contacts are provided by Tyr-196, Lys-200, Ile-228, and Thr-230. The Proton acceptor role is filled by Tyr-196. Residue Lys-200 is the Lowers pKa of active site Tyr of the active site.

The protein belongs to the short-chain dehydrogenases/reductases (SDR) family.

The enzyme catalyses xylitol + NADP(+) = L-xylulose + NADPH + H(+). Its pathway is carbohydrate degradation; L-arabinose degradation via L-arabinitol; D-xylulose 5-phosphate from L-arabinose (fungal route): step 3/5. In terms of biological role, L-xylulose reductase involved in the catabolism of L-arabinose through an oxidoreductive pathway. Catalyzes the NADPH-dependent reduction of L-xylulose. Is also able to convert D-xylulose, D-ribulose, L-sorbose, and D-fructose to their corresponding polyols. This chain is L-xylulose reductase, found in Hypocrea jecorina (strain QM6a) (Trichoderma reesei).